We begin with the raw amino-acid sequence, 320 residues long: MQTRNTFSWIREEITRSISVSLMIYIITWASISGAYPIFAQQNYENPREATGRIVCANCHLANKPVDIEVPQTVLPDTVFEAVVKIPYDMQLKQVLANGKKGALNVGAVLILPEGFELAPPDRISPEMKEKIGNLSFQNYRPNKKNILVIGPVPGQKYSEITFPILAPDPATNKDVHFLKYPIYVGGNRGRGQIYPDGSKSNNTVYNATAGGIISKILRKEKGGYEITIVDASNGREVIDIIPRGLELLVSEGESIKLDQPLTSNPNVGGFGQGDAEIVLQDPLRVQGLLFFLGSVVLAQIFLVLKKKQFEKVQLSEMNF.

An N-terminal signal peptide occupies residues 1–35 (MQTRNTFSWIREEITRSISVSLMIYIITWASISGA). Heme contacts are provided by Y36, C56, C59, and H60. Residues 286-306 (VQGLLFFLGSVVLAQIFLVLK) traverse the membrane as a helical segment.

This sequence belongs to the cytochrome f family. As to quaternary structure, the 4 large subunits of the cytochrome b6-f complex are cytochrome b6, subunit IV (17 kDa polypeptide, petD), cytochrome f and the Rieske protein, while the 4 small subunits are PetG, PetL, PetM and PetN. The complex functions as a dimer. Heme serves as cofactor.

The protein localises to the plastid. It is found in the chloroplast thylakoid membrane. Its function is as follows. Component of the cytochrome b6-f complex, which mediates electron transfer between photosystem II (PSII) and photosystem I (PSI), cyclic electron flow around PSI, and state transitions. The protein is Cytochrome f of Capsella bursa-pastoris (Shepherd's purse).